The following is a 68-amino-acid chain: Large ribosomal subunit protein uL29 (68 aa).

Belongs to the universal ribosomal protein uL29 family.

The polypeptide is Large ribosomal subunit protein uL29 (Nitrobacter hamburgensis (strain DSM 10229 / NCIMB 13809 / X14)).